The primary structure comprises 103 residues: Large ribosomal subunit protein bL21 (103 aa).

Belongs to the bacterial ribosomal protein bL21 family. As to quaternary structure, part of the 50S ribosomal subunit. Contacts protein L20.

Its function is as follows. This protein binds to 23S rRNA in the presence of protein L20. This is Large ribosomal subunit protein bL21 from Heliobacterium modesticaldum (strain ATCC 51547 / Ice1).